The primary structure comprises 657 residues: Glycogen debranching enzyme (657 aa).

Aspartate 336 functions as the Nucleophile in the catalytic mechanism. Glutamate 371 (proton donor) is an active-site residue. A compositionally biased stretch (basic and acidic residues) spans 458–467 (NEANGEENRD). Positions 458-479 (NEANGEENRDGTNNNYSNNHGK) are disordered.

It belongs to the glycosyl hydrolase 13 family.

The enzyme catalyses Hydrolysis of (1-&gt;6)-alpha-D-glucosidic linkages to branches with degrees of polymerization of three or four glucose residues in limit dextrin.. Its pathway is glycan degradation; glycogen degradation. In terms of biological role, removes maltotriose and maltotetraose chains that are attached by 1,6-alpha-linkage to the limit dextrin main chain, generating a debranched limit dextrin. In Escherichia coli O139:H28 (strain E24377A / ETEC), this protein is Glycogen debranching enzyme.